Here is a 300-residue protein sequence, read N- to C-terminus: uncharacterized protein (300 aa).

Catalysis depends on His-274, which acts as the Proton acceptor.

The protein belongs to the AB hydrolase superfamily. As to quaternary structure, monomer.

It carries out the reaction a carboxylic ester + H2O = an alcohol + a carboxylate + H(+). This is an uncharacterized protein from Bacillus subtilis (strain 168).